We begin with the raw amino-acid sequence, 168 residues long: Photosystem I assembly protein Ycf3 (168 aa).

3 TPR repeats span residues 35-68 (AFTY…EIDP), 72-105 (SYIL…NPFL), and 120-153 (GEQA…TPGN).

Belongs to the Ycf3 family.

It is found in the plastid. The protein localises to the chloroplast thylakoid membrane. Its function is as follows. Essential for the assembly of the photosystem I (PSI) complex. May act as a chaperone-like factor to guide the assembly of the PSI subunits. The sequence is that of Photosystem I assembly protein Ycf3 from Ipomoea purpurea (Common morning glory).